Consider the following 265-residue polypeptide: 3-methyl-2-oxobutanoate hydroxymethyltransferase (265 aa).

Positions 43 and 82 each coordinate Mg(2+). 3-methyl-2-oxobutanoate is bound by residues 43-44 (DS), Asp-82, and Lys-111. Glu-113 serves as a coordination point for Mg(2+). The Proton acceptor role is filled by Glu-180.

Belongs to the PanB family. In terms of assembly, homodecamer; pentamer of dimers. Mg(2+) serves as cofactor.

The protein localises to the cytoplasm. It carries out the reaction 3-methyl-2-oxobutanoate + (6R)-5,10-methylene-5,6,7,8-tetrahydrofolate + H2O = 2-dehydropantoate + (6S)-5,6,7,8-tetrahydrofolate. Its pathway is cofactor biosynthesis; (R)-pantothenate biosynthesis; (R)-pantoate from 3-methyl-2-oxobutanoate: step 1/2. In terms of biological role, catalyzes the reversible reaction in which hydroxymethyl group from 5,10-methylenetetrahydrofolate is transferred onto alpha-ketoisovalerate to form ketopantoate. This chain is 3-methyl-2-oxobutanoate hydroxymethyltransferase, found in Francisella tularensis subsp. novicida (strain U112).